Consider the following 168-residue polypeptide: 3-isopropylmalate dehydratase small subunit 2 (168 aa).

This sequence belongs to the LeuD family. LeuD type 2 subfamily. Heterodimer of LeuC and LeuD.

It catalyses the reaction (2R,3S)-3-isopropylmalate = (2S)-2-isopropylmalate. It participates in amino-acid biosynthesis; L-leucine biosynthesis; L-leucine from 3-methyl-2-oxobutanoate: step 2/4. Catalyzes the isomerization between 2-isopropylmalate and 3-isopropylmalate, via the formation of 2-isopropylmaleate. This Methanopyrus kandleri (strain AV19 / DSM 6324 / JCM 9639 / NBRC 100938) protein is 3-isopropylmalate dehydratase small subunit 2 (leuD2).